The primary structure comprises 432 residues: 3-phosphoshikimate 1-carboxyvinyltransferase (432 aa).

3-phosphoshikimate is bound by residues Lys22, Ser23, and Arg27. Lys22 contributes to the phosphoenolpyruvate binding site. The phosphoenolpyruvate site is built by Gly96 and Arg127. Positions 173, 174, 175, 201, 316, 339, and 343 each coordinate 3-phosphoshikimate. Phosphoenolpyruvate is bound at residue Gln175. Asp316 serves as the catalytic Proton acceptor. Phosphoenolpyruvate-binding residues include Arg347, Arg391, and Lys416.

This sequence belongs to the EPSP synthase family. Monomer.

It is found in the cytoplasm. The catalysed reaction is 3-phosphoshikimate + phosphoenolpyruvate = 5-O-(1-carboxyvinyl)-3-phosphoshikimate + phosphate. It participates in metabolic intermediate biosynthesis; chorismate biosynthesis; chorismate from D-erythrose 4-phosphate and phosphoenolpyruvate: step 6/7. Catalyzes the transfer of the enolpyruvyl moiety of phosphoenolpyruvate (PEP) to the 5-hydroxyl of shikimate-3-phosphate (S3P) to produce enolpyruvyl shikimate-3-phosphate and inorganic phosphate. This Haemophilus influenzae (strain ATCC 51907 / DSM 11121 / KW20 / Rd) protein is 3-phosphoshikimate 1-carboxyvinyltransferase.